Consider the following 215-residue polypeptide: Cytochrome b6 (215 aa).

A helical membrane pass occupies residues 32–52 (IFYCLGGITLTCFLVQVATGF). Residue Cys35 coordinates heme c. 2 residues coordinate heme b: His86 and His100. Transmembrane regions (helical) follow at residues 90–110 (ASMMVLMMILHVFRVYLTGGF), 116–136 (LTWVTGVVLAVLTASFGVTGY), and 186–206 (LHTFVLPLLTAVFMLMHFPMI). Heme b-binding residues include His187 and His202.

This sequence belongs to the cytochrome b family. PetB subfamily. As to quaternary structure, the 4 large subunits of the cytochrome b6-f complex are cytochrome b6, subunit IV (17 kDa polypeptide, PetD), cytochrome f and the Rieske protein, while the 4 small subunits are PetG, PetL, PetM and PetN. The complex functions as a dimer. The cofactor is heme b. Requires heme c as cofactor.

It localises to the plastid. It is found in the chloroplast thylakoid membrane. Component of the cytochrome b6-f complex, which mediates electron transfer between photosystem II (PSII) and photosystem I (PSI), cyclic electron flow around PSI, and state transitions. In Phalaenopsis aphrodite subsp. formosana (Moth orchid), this protein is Cytochrome b6.